Here is a 224-residue protein sequence, read N- to C-terminus: Protein FAM3D (224 aa).

The signal sequence occupies residues 1–25 (MRVSGVLRLLALIFAIVTTWMFIRS). 2 disulfide bridges follow: Cys55–Cys83 and Cys61–Cys218. Positions 64–222 (NYFAFKICSG…LEMEGCMPPK (159 aa)) constitute a GG-type lectin domain. An N-linked (GlcNAc...) asparagine glycan is attached at Asn107.

It belongs to the FAM3 family. Abundantly expressed in placenta and weakly expressed in small intestine.

The protein localises to the secreted. This is Protein FAM3D (FAM3D) from Homo sapiens (Human).